The sequence spans 318 residues: ADP-L-glycero-D-manno-heptose-6-epimerase (318 aa).

NADP(+) contacts are provided by residues 10 to 11 (FI), 31 to 32 (DN), lysine 38, lysine 53, 76 to 80 (QGACS), and asparagine 93. Tyrosine 141 (proton acceptor) is an active-site residue. Residue lysine 145 coordinates NADP(+). Asparagine 172 provides a ligand contact to substrate. NADP(+)-binding residues include valine 173 and lysine 181. Residue lysine 181 is the Proton acceptor of the active site. Residues arginine 183, histidine 190, 204 to 207 (FEGS), arginine 212, and tyrosine 276 contribute to the substrate site.

This sequence belongs to the NAD(P)-dependent epimerase/dehydratase family. HldD subfamily. Homopentamer. It depends on NADP(+) as a cofactor.

The enzyme catalyses ADP-D-glycero-beta-D-manno-heptose = ADP-L-glycero-beta-D-manno-heptose. It functions in the pathway nucleotide-sugar biosynthesis; ADP-L-glycero-beta-D-manno-heptose biosynthesis; ADP-L-glycero-beta-D-manno-heptose from D-glycero-beta-D-manno-heptose 7-phosphate: step 4/4. In terms of biological role, catalyzes the interconversion between ADP-D-glycero-beta-D-manno-heptose and ADP-L-glycero-beta-D-manno-heptose via an epimerization at carbon 6 of the heptose. The sequence is that of ADP-L-glycero-D-manno-heptose-6-epimerase from Brachyspira hyodysenteriae (strain ATCC 49526 / WA1).